Consider the following 132-residue polypeptide: Glycine cleavage system H protein (132 aa).

One can recognise a Lipoyl-binding domain in the interval I24–R106. An N6-lipoyllysine modification is found at K65.

It belongs to the GcvH family. As to quaternary structure, the glycine cleavage system is composed of four proteins: P, T, L and H. (R)-lipoate is required as a cofactor.

Its function is as follows. The glycine cleavage system catalyzes the degradation of glycine. The H protein shuttles the methylamine group of glycine from the P protein to the T protein. The chain is Glycine cleavage system H protein from Picosynechococcus sp. (strain ATCC 27264 / PCC 7002 / PR-6) (Agmenellum quadruplicatum).